The chain runs to 197 residues: Rac-like GTP-binding protein 6 (197 aa).

13 to 20 (GDGAVGKT) is a GTP binding site. Residues 35-43 (YVPTVFDNF) carry the Effector region motif. GTP is bound by residues 60–64 (DTAGQ) and 118–121 (TKLD). Position 194 is a cysteine methyl ester (C194). C194 carries S-geranylgeranyl cysteine lipidation. The propeptide at 195–197 (SIL) is removed in mature form.

This sequence belongs to the small GTPase superfamily. Rho family.

It localises to the cytoplasm. The protein resides in the membrane. Its function is as follows. Inactive GDP-bound Rho GTPases reside in the cytosol, are found in a complex with Rho GDP-dissociation inhibitors (Rho GDIs), and are released from the GDI protein in order to translocate to membranes upon activation. This chain is Rac-like GTP-binding protein 6 (RAC6), found in Oryza sativa subsp. japonica (Rice).